The chain runs to 212 residues: N-(5'-phosphoribosyl)anthranilate isomerase (212 aa).

The protein belongs to the TrpF family.

The catalysed reaction is N-(5-phospho-beta-D-ribosyl)anthranilate = 1-(2-carboxyphenylamino)-1-deoxy-D-ribulose 5-phosphate. It functions in the pathway amino-acid biosynthesis; L-tryptophan biosynthesis; L-tryptophan from chorismate: step 3/5. In Roseiflexus castenholzii (strain DSM 13941 / HLO8), this protein is N-(5'-phosphoribosyl)anthranilate isomerase.